Here is a 172-residue protein sequence, read N- to C-terminus: MORN repeat-containing protein 5 (172 aa).

3 MORN repeats span residues 8–30, 31–53, and 54–75; these read YIGEFVDGRMEGDAEYILPTETK, YIGEMKDGMFHGQGTLYFPNGSR, and FDAVWEKGLVVKGTYTFSDGLQ.

It localises to the cell projection. Its subcellular location is the cilium. The protein localises to the flagellum. The polypeptide is MORN repeat-containing protein 5 (MORN5) (Bos taurus (Bovine)).